The sequence spans 362 residues: Chalcone synthase A (362 aa).

Residue Cys168 is part of the active site.

This sequence belongs to the thiolase-like superfamily. Chalcone/stilbene synthases family.

The catalysed reaction is (E)-4-coumaroyl-CoA + 3 malonyl-CoA + 3 H(+) = 2',4,4',6'-tetrahydroxychalcone + 3 CO2 + 4 CoA. Its pathway is secondary metabolite biosynthesis; flavonoid biosynthesis. In terms of biological role, the primary product of this enzyme is 4,2',4',6'-tetrahydroxychalcone (also termed naringenin-chalcone or chalcone) which can under specific conditions spontaneously isomerize into naringenin. The sequence is that of Chalcone synthase A (CHSA) from Ipomoea triloba (Trilobed morning glory).